A 335-amino-acid chain; its full sequence is V-set and immunoglobulin domain-containing protein 1 (335 aa).

The first 21 residues, 1–21 (MFPTMLKIFPILATLAGHVHG), serve as a signal peptide directing secretion. An Ig-like V-type domain is found at 22-136 (VVVTVPEKTV…SQKSVIVNVL (115 aa)). Topologically, residues 22 to 233 (VVVTVPEKTV…DLTSMHSDGN (212 aa)) are extracellular. Intrachain disulfides connect Cys-43-Cys-115 and Cys-160-Cys-210. The 88-residue stretch at 139–226 (PSKPFCKIEG…GNSTCELDLT (88 aa)) folds into the Ig-like C2-type domain. Residues 234 to 254 (IVAGALIGAILAAVIICAIVW) form a helical membrane-spanning segment. Residues 255-335 (VLTKKAKKKK…QKEETAGSSF (81 aa)) lie on the Cytoplasmic side of the membrane. The interval 266 to 335 (SSNEMQVMAQ…QKEETAGSSF (70 aa)) is disordered. The segment covering 268 to 306 (NEMQVMAQKQSNAEYAQVPNEENTPATAVLPSNATNEQP) has biased composition (polar residues). Residues 319–335 (NDEKHEVQKEETAGSSF) are compositionally biased toward basic and acidic residues.

As to expression, expressed in thymocytes.

The protein localises to the membrane. This is V-set and immunoglobulin domain-containing protein 1 (VSIG1) from Gallus gallus (Chicken).